A 147-amino-acid chain; its full sequence is Alpha-amylase/trypsin inhibitor (147 aa).

A signal peptide spans 1-21 (MASDHRRFVLSGAVLLSVLAV).

Belongs to the protease inhibitor I6 (cereal trypsin/alpha-amylase inhibitor) family. Post-translationally, five disulfide bonds, which are essential for the inhibitor activity, are probably present. Endosperm.

The protein localises to the secreted. Its function is as follows. Alpha-amylase/trypsin inhibitor. This chain is Alpha-amylase/trypsin inhibitor, found in Hordeum vulgare (Barley).